Reading from the N-terminus, the 776-residue chain is V-set and immunoglobulin domain-containing protein 10-like 2 (776 aa).

The first 28 residues, 1-28 (MVGLSAHHRPLGCRLLILFCLLHPGASG), serve as a signal peptide directing secretion. 5 Ig-like domains span residues 32-140 (PTSN…LYLM), 150-234 (PRVQ…AFLD), 242-324 (PVIT…TTVQ), 399-498 (PTLA…LRLE), and 500-592 (PQLT…VLLE). 5 disulfide bridges follow: Cys56–Cys122, Cys169–Cys217, Cys268–Cys308, Cys435–Cys480, and Cys521–Cys576. Residues 608–708 (TPPNVTISRL…EVKTPVDPAF (101 aa)) enclose the Fibronectin type-III domain. Asn611 and Asn637 each carry an N-linked (GlcNAc...) asparagine glycan. Residues 713–733 (AVLGAAGTGVVVALATSLLVF) form a helical membrane-spanning segment.

It localises to the membrane. This chain is V-set and immunoglobulin domain-containing protein 10-like 2, found in Mus musculus (Mouse).